Reading from the N-terminus, the 894-residue chain is Protein SEY1 (894 aa).

Residues 1-64 (MGLDVDSVPI…PRALEPAQVT (64 aa)) form a disordered region. Residues 1–768 (MGLDVDSVPI…KRGTVSSMSQ (768 aa)) are Cytoplasmic-facing. A compositionally biased stretch (low complexity) spans 9–24 (PIAEAAAPSSMAATEP). Polar residues predominate over residues 40–53 (APMNTDSSRETMPT). Residues 137 to 359 (GFGYDICAVL…DESYVFKTEY (223 aa)) form the GB1/RHD3-type G domain. 147-154 (GSQSTGKS) provides a ligand contact to GTP. Residues 536-559 (KVDDERAQLLDELHTLARTLRANE) are a coiled coil. Residues 769 to 789 (VPIWMYGVLVVLGWNEAMAVL) traverse the membrane as a helical segment. Topologically, residues 790–792 (RNP) are lumenal. The helical transmembrane segment at 793–813 (VYFTLLCMVLATAYVIWRLNL) threads the bilayer. Topologically, residues 814-894 (GTPVLALASG…DSHPRLPASF (81 aa)) are cytoplasmic. The disordered stretch occupies residues 841 to 894 (DGTPPSANRAREYRVPSGSTAHVSEKTPHRPLTTSGAAEADTVEDSHPRLPASF).

It belongs to the TRAFAC class dynamin-like GTPase superfamily. GB1/RHD3 GTPase family. RHD3 subfamily.

The protein resides in the endoplasmic reticulum membrane. In terms of biological role, cooperates with the reticulon proteins and tubule-shaping DP1 family proteins to generate and maintain the structure of the tubular endoplasmic reticulum network. Has GTPase activity, which is required for its function in ER organization. This Malassezia globosa (strain ATCC MYA-4612 / CBS 7966) (Dandruff-associated fungus) protein is Protein SEY1.